The sequence spans 558 residues: Membrane protein insertase YidC (558 aa).

Transmembrane regions (helical) follow at residues 6–26 (VIAAISLSAAVIILYSLFFQP), 326–348 (LAIDWGFMYFITKPLFFVLDYFF), 355–377 (GLAIIAVTICIRLAFFPLANFSF), 424–444 (LPILVQIPVFFALYKVLFVTI), 469–489 (VFGLIPWDPPSFLLIGAWPII), and 512–532 (IFMFFPVFLTVILAPFPAGLV).

This sequence belongs to the OXA1/ALB3/YidC family. Type 1 subfamily. As to quaternary structure, interacts with the Sec translocase complex via SecD. Specifically interacts with transmembrane segments of nascent integral membrane proteins during membrane integration.

The protein resides in the cell inner membrane. Its function is as follows. Required for the insertion and/or proper folding and/or complex formation of integral membrane proteins into the membrane. Involved in integration of membrane proteins that insert both dependently and independently of the Sec translocase complex, as well as at least some lipoproteins. Aids folding of multispanning membrane proteins. This chain is Membrane protein insertase YidC, found in Pelagibacter ubique (strain HTCC1062).